Consider the following 147-residue polypeptide: Histone-lysine N-methyltransferase, H3 lysine-37 specific (147 aa).

The region spanning 8–116 is the SET domain; the sequence is SPLEIRDTER…TNEELCISYG (109 aa).

It belongs to the class V-like SAM-binding methyltransferase superfamily. As to quaternary structure, homodimer.

Its subcellular location is the cytoplasm. The protein localises to the nucleus. The enzyme catalyses L-lysyl(37)-[histone H3] + S-adenosyl-L-methionine = N(6)-methyl-L-lysyl(37)-[histone H3] + S-adenosyl-L-homocysteine + H(+). It carries out the reaction N(6)-methyl-L-lysyl(37)-[histone H3] + S-adenosyl-L-methionine = N(6),N(6)-dimethyl-L-lysyl(37)-[histone H3] + S-adenosyl-L-homocysteine + H(+). It catalyses the reaction N(6),N(6)-dimethyl-L-lysyl(37)-[histone H3] + S-adenosyl-L-methionine = N(6),N(6),N(6)-trimethyl-L-lysyl(37)-[histone H3] + S-adenosyl-L-homocysteine + H(+). Functionally, histone lysine methyltransferase that specifically mono-, di-, and trimethylates 'Lys-37' of histone H3 to regulate sporulation. The polypeptide is Histone-lysine N-methyltransferase, H3 lysine-37 specific (Schizosaccharomyces pombe (strain 972 / ATCC 24843) (Fission yeast)).